A 506-amino-acid chain; its full sequence is TOM1-like protein 3 (506 aa).

A VHS domain is found at 12–141 (ATNDMLIGPD…ELRSAGIEFP (130 aa)). The region spanning 180-268 (DASALSMEEI…VLQHHDDKAK (89 aa)) is the GAT domain. Disordered regions lie at residues 266–328 (KAKG…PPSS), 351–384 (ETFE…SKSP), and 398–477 (EQLP…PEDI). Residues 288-298 (DDDDDESDDDF) are compositionally biased toward acidic residues. At Ser294 the chain carries Phosphoserine. Positions 358–368 (PPSTSQSSNHD) are enriched in polar residues. Ser383 is subject to Phosphoserine. Residues 450–460 (QSRNLSLNPTA) show a composition bias toward polar residues. Over residues 468–477 (PKKDDKPEDI) the composition is skewed to basic and acidic residues.

Belongs to the TOM1 family. In terms of tissue distribution, preferentially expressed in cauline leaves.

The protein localises to the membrane. Might contribute to the loading of the ESCRT machinery. In Arabidopsis thaliana (Mouse-ear cress), this protein is TOM1-like protein 3.